Reading from the N-terminus, the 250-residue chain is 3-deoxy-manno-octulosonate cytidylyltransferase (250 aa).

Belongs to the KdsB family.

The protein localises to the cytoplasm. The catalysed reaction is 3-deoxy-alpha-D-manno-oct-2-ulosonate + CTP = CMP-3-deoxy-beta-D-manno-octulosonate + diphosphate. It participates in nucleotide-sugar biosynthesis; CMP-3-deoxy-D-manno-octulosonate biosynthesis; CMP-3-deoxy-D-manno-octulosonate from 3-deoxy-D-manno-octulosonate and CTP: step 1/1. Its pathway is bacterial outer membrane biogenesis; lipopolysaccharide biosynthesis. Functionally, activates KDO (a required 8-carbon sugar) for incorporation into bacterial lipopolysaccharide in Gram-negative bacteria. The sequence is that of 3-deoxy-manno-octulosonate cytidylyltransferase from Legionella pneumophila (strain Paris).